The sequence spans 220 residues: Deoxyribose-phosphate aldolase (220 aa).

Asp-92 (proton donor/acceptor) is an active-site residue. The active-site Schiff-base intermediate with acetaldehyde is Lys-155. Lys-184 acts as the Proton donor/acceptor in catalysis.

This sequence belongs to the DeoC/FbaB aldolase family. DeoC type 1 subfamily.

It is found in the cytoplasm. The catalysed reaction is 2-deoxy-D-ribose 5-phosphate = D-glyceraldehyde 3-phosphate + acetaldehyde. The protein operates within carbohydrate degradation; 2-deoxy-D-ribose 1-phosphate degradation; D-glyceraldehyde 3-phosphate and acetaldehyde from 2-deoxy-alpha-D-ribose 1-phosphate: step 2/2. Its function is as follows. Catalyzes a reversible aldol reaction between acetaldehyde and D-glyceraldehyde 3-phosphate to generate 2-deoxy-D-ribose 5-phosphate. The sequence is that of Deoxyribose-phosphate aldolase from Natranaerobius thermophilus (strain ATCC BAA-1301 / DSM 18059 / JW/NM-WN-LF).